Reading from the N-terminus, the 89-residue chain is Small ribosomal subunit protein uS15 (89 aa).

The protein belongs to the universal ribosomal protein uS15 family. Part of the 30S ribosomal subunit. Forms a bridge to the 50S subunit in the 70S ribosome, contacting the 23S rRNA.

Functionally, one of the primary rRNA binding proteins, it binds directly to 16S rRNA where it helps nucleate assembly of the platform of the 30S subunit by binding and bridging several RNA helices of the 16S rRNA. Forms an intersubunit bridge (bridge B4) with the 23S rRNA of the 50S subunit in the ribosome. The polypeptide is Small ribosomal subunit protein uS15 (Pseudomonas fluorescens (strain SBW25)).